Reading from the N-terminus, the 316-residue chain is Mitochondrial GTPase 1 (316 aa).

The CP-type G domain occupies 28–203 (MKQMQQKLKQ…LLDTPGILKP (176 aa)). Residues 73 to 76 (NKKD), 147 to 152 (NVGKSS), and Gly199 each bind GTP.

Belongs to the TRAFAC class YlqF/YawG GTPase family. MTG1 subfamily.

It is found in the mitochondrion inner membrane. Its function is as follows. Plays a role in the regulation of the mitochondrial ribosome assembly and of translational activity. Displays mitochondrial GTPase activity. The protein is Mitochondrial GTPase 1 of Aedes aegypti (Yellowfever mosquito).